Consider the following 298-residue polypeptide: Exosome complex component Rrp4 (298 aa).

Positions Gly63 to Lys131 constitute an S1 motif domain. The 59-residue stretch at Arg139 to Ile197 folds into the KH domain. The disordered stretch occupies residues Lys276–Arg298. The segment covering Tyr285–Arg298 has biased composition (polar residues).

This sequence belongs to the RRP4 family. In terms of assembly, component of the archaeal exosome complex. Forms a trimer of Rrp4 and/or Csl4 subunits. The trimer associates with a hexameric ring-like arrangement composed of 3 Rrp41-Rrp42 heterodimers.

Its subcellular location is the cytoplasm. Non-catalytic component of the exosome, which is a complex involved in RNA degradation. Increases the RNA binding and the efficiency of RNA degradation. Confers strong poly(A) specificity to the exosome. The chain is Exosome complex component Rrp4 from Methanobrevibacter smithii (strain ATCC 35061 / DSM 861 / OCM 144 / PS).